The sequence spans 316 residues: Apolipoprotein E (316 aa).

Residues 1–18 (MKALWAVLVVTLLAGCLA) form the signal peptide. Tandem repeats lie at residues 76 to 97 (VLME…EQMG), 98 to 119 (PMAE…SRLG), 120 to 141 (ADME…TMLG), 142 to 163 (QSTE…KRLM), 164 to 185 (RDAE…EGAE), 186 to 207 (RGVG…QRTA), 208 to 229 (NLGA…ARIR), and 230 to 251 (GRLE…EQME). The segment at 76-251 (VLMEDTMTEL…RLEEVREQME (176 aa)) is 8 X 22 AA approximate tandem repeats. A Methionine sulfoxide modification is found at methionine 139. Phosphoserine is present on serine 143. An LDL and other lipoprotein receptors binding region spans residues 154 to 164 (HLRKLRKRLMR). 158–161 (LRKR) provides a ligand contact to heparin. A lipid-binding and lipoprotein association region spans residues 206–286 (TANLGAGAAQ…GWFEPLVEDM (81 aa)). 225-232 (GARIRGRL) serves as a coordination point for heparin. The segment at 262 to 316 (QQMRLQAEIFQTRLKGWFEPLVEDMQRQWANLMEKIQASVATNPIPPSSVPQESQ) is homooligomerization. Residues 274-286 (RLKGWFEPLVEDM) form a specificity for association with VLDL region.

This sequence belongs to the apolipoprotein A1/A4/E family. In terms of assembly, homotetramer. May interact with ABCA1; functionally associated with ABCA1 in the biogenesis of HDLs. May interact with APP/A4 amyloid-beta peptide; the interaction is extremely stable in vitro but its physiological significance is unclear. May interact with MAPT. May interact with MAP2. In the cerebrospinal fluid, interacts with secreted SORL1. Interacts with PMEL; this allows the loading of PMEL luminal fragment on ILVs to induce fibril nucleation. Post-translationally, APOE exists as multiple glycosylated and sialylated glycoforms within cells and in plasma. The extent of glycosylation and sialylation are tissue and context specific. In terms of processing, glycated in plasma VLDL. Phosphorylated by FAM20C in the extracellular medium.

It is found in the secreted. Its subcellular location is the extracellular space. It localises to the extracellular matrix. The protein localises to the extracellular vesicle. The protein resides in the endosome. It is found in the multivesicular body. APOE is an apolipoprotein, a protein associating with lipid particles, that mainly functions in lipoprotein-mediated lipid transport between organs via the plasma and interstitial fluids. APOE is a core component of plasma lipoproteins and is involved in their production, conversion and clearance. Apolipoproteins are amphipathic molecules that interact both with lipids of the lipoprotein particle core and the aqueous environment of the plasma. As such, APOE associates with chylomicrons, chylomicron remnants, very low density lipoproteins (VLDL) and intermediate density lipoproteins (IDL) but shows a preferential binding to high-density lipoproteins (HDL). It also binds a wide range of cellular receptors including the LDL receptor/LDLR, the LDL receptor-related proteins LRP1, LRP2 and LRP8 and the very low-density lipoprotein receptor/VLDLR that mediate the cellular uptake of the APOE-containing lipoprotein particles. Finally, APOE also has a heparin-binding activity and binds heparan-sulfate proteoglycans on the surface of cells, a property that supports the capture and the receptor-mediated uptake of APOE-containing lipoproteins by cells. A main function of APOE is to mediate lipoprotein clearance through the uptake of chylomicrons, VLDLs, and HDLs by hepatocytes. APOE is also involved in the biosynthesis by the liver of VLDLs as well as their uptake by peripheral tissues ensuring the delivery of triglycerides and energy storage in muscle, heart and adipose tissues. By participating in the lipoprotein-mediated distribution of lipids among tissues, APOE plays a critical role in plasma and tissues lipid homeostasis. APOE is also involved in two steps of reverse cholesterol transport, the HDLs-mediated transport of cholesterol from peripheral tissues to the liver, and thereby plays an important role in cholesterol homeostasis. First, it is functionally associated with ABCA1 in the biogenesis of HDLs in tissues. Second, it is enriched in circulating HDLs and mediates their uptake by hepatocytes. APOE also plays an important role in lipid transport in the central nervous system, regulating neuron survival and sprouting. The sequence is that of Apolipoprotein E (APOE) from Microtus ochrogaster (Prairie vole).